Here is a 339-residue protein sequence, read N- to C-terminus: Small ribosomal subunit protein mS27 (339 aa).

The N-terminal 37 residues, 1–37 (MGTITVVINEGPILLIRALHRATTNKKMFRSTVWRRF), are a transit peptide targeting the mitochondrion.

It belongs to the mitochondrion-specific ribosomal protein mS27 family. Component of the mitochondrial small ribosomal subunit (mt-SSU). Mature yeast 74S mitochondrial ribosomes consist of a small (37S) and a large (54S) subunit. The 37S small subunit contains a 15S ribosomal RNA (15S mt-rRNA) and 34 different proteins. The 54S large subunit contains a 21S rRNA (21S mt-rRNA) and 46 different proteins.

The protein localises to the mitochondrion. Functionally, component of the mitochondrial ribosome (mitoribosome), a dedicated translation machinery responsible for the synthesis of mitochondrial genome-encoded proteins, including at least some of the essential transmembrane subunits of the mitochondrial respiratory chain. The mitoribosomes are attached to the mitochondrial inner membrane and translation products are cotranslationally integrated into the membrane. The protein is Small ribosomal subunit protein mS27 (MRP13) of Saccharomyces cerevisiae (strain ATCC 204508 / S288c) (Baker's yeast).